We begin with the raw amino-acid sequence, 61 residues long: Large ribosomal subunit protein bL28 (61 aa).

The segment at 1–26 (MAKDYVTGKRTHFGNTRSHALNHSRR) is disordered.

The protein belongs to the bacterial ribosomal protein bL28 family.

This is Large ribosomal subunit protein bL28 from Lactiplantibacillus plantarum (strain ATCC BAA-793 / NCIMB 8826 / WCFS1) (Lactobacillus plantarum).